An 80-amino-acid chain; its full sequence is Exodeoxyribonuclease 7 small subunit (80 aa).

It belongs to the XseB family. As to quaternary structure, heterooligomer composed of large and small subunits.

It localises to the cytoplasm. It carries out the reaction Exonucleolytic cleavage in either 5'- to 3'- or 3'- to 5'-direction to yield nucleoside 5'-phosphates.. Bidirectionally degrades single-stranded DNA into large acid-insoluble oligonucleotides, which are then degraded further into small acid-soluble oligonucleotides. The protein is Exodeoxyribonuclease 7 small subunit of Maridesulfovibrio salexigens (strain ATCC 14822 / DSM 2638 / NCIMB 8403 / VKM B-1763) (Desulfovibrio salexigens).